The primary structure comprises 383 residues: ATP phosphoribosyltransferase regulatory subunit (383 aa).

Belongs to the class-II aminoacyl-tRNA synthetase family. HisZ subfamily. As to quaternary structure, heteromultimer composed of HisG and HisZ subunits.

It is found in the cytoplasm. Its pathway is amino-acid biosynthesis; L-histidine biosynthesis; L-histidine from 5-phospho-alpha-D-ribose 1-diphosphate: step 1/9. In terms of biological role, required for the first step of histidine biosynthesis. May allow the feedback regulation of ATP phosphoribosyltransferase activity by histidine. This chain is ATP phosphoribosyltransferase regulatory subunit, found in Desulfitobacterium hafniense (strain DSM 10664 / DCB-2).